Reading from the N-terminus, the 827-residue chain is Cadherin-17 (827 aa).

Positions 1–25 are cleaved as a signal peptide; the sequence is MVSAQLHFLCLLTLYLTCGYGEEGK. Over 26–786 the chain is Extracellular; sequence FSGPLKPMTF…RQDGIPTVGM (761 aa). Cadherin domains lie at 29 to 127, 128 to 243, 244 to 339, 340 to 448, 449 to 565, 566 to 666, and 667 to 776; these read PLKP…TFLQ, SKYE…APEP, VEIR…PPTC, LSPV…IPIF, ETSN…VPVF, PQRI…PPRL, and AKDY…RPAG. Residues asparagine 148, asparagine 249, asparagine 418, asparagine 545, asparagine 573, asparagine 586, and asparagine 721 are each glycosylated (N-linked (GlcNAc...) asparagine). A helical membrane pass occupies residues 787-807; that stretch reads AVGILLTTFLVIGIILAVVFI. Topologically, residues 808–827 are cytoplasmic; that stretch reads RMRKDKVENPQSPENKPLRS.

As to expression, highest expression is found in intestine with lower expression in spleen, bone marrow, lung and testis. No expression detected in liver, kidney, heart, brain or skeletal muscle. Expressed in precursor B-cells and myeloid cells.

It is found in the cell membrane. In terms of biological role, cadherins are calcium-dependent cell adhesion proteins. They preferentially interact with themselves in a homophilic manner in connecting cells; cadherins may thus contribute to the sorting of heterogeneous cell types. LI-cadherin may have a role in the morphological organization of liver and intestine. The polypeptide is Cadherin-17 (Cdh17) (Mus musculus (Mouse)).